We begin with the raw amino-acid sequence, 533 residues long: MFPRLQAVSAPALLQITLMAVLLAPVLGDCGPPPILPFASPVIQSYETNFRTGTALKYNCHRGYWRVNSSHVICDINGSWIYNVFCAKKRCRNPGELANGKVEIITDLLFGSTIEFSCSKGYSLIGSTTSQCESQGKTVDWSDPLPECVIVKCDSPPDISNGKHSGTDEDLYTYGSLVTYVCDPNYSLLGNASISCLVANKTVGVWSSNPPTCEKVICRQPHIPKGIFLSGFGFYYTYKDTLVISCKKGYILRGSSIIHCEANSKWYPSIPTCEPNGCIDLPEVPYISWERNVLSLKNQEIFEIGSLLKYDCKTGYRPTPNEPRTVTCQENLKWAISKGCERVCCPTPNMEKMRIINERRDFTGVCVYAYEDYIFYMCDEGYYPISADGRSSCQADGMWNPKMPACESAVCLKPDILNGKLSVEKDHYTETENVTIHCDSGYEVVGPQNIICSENRTWTPEIPKCEWEVPEECKQVAAGRKLLECLPNPSDVKMALEVYKLSLEIEQLEKEKYVKIQEKFSKKEMKQLTSALH.

A signal peptide spans 1 to 28 (MFPRLQAVSAPALLQITLMAVLLAPVLG). Sushi domains follow at residues 29 to 88 (DCGP…FCAK), 89 to 150 (KRCR…ECVI), 151 to 215 (VKCD…TCEK), 216 to 275 (VICR…TCEP), 276 to 342 (NGCI…GCER), 343 to 408 (VCCP…ACES), and 409 to 467 (AVCL…KCEW). 14 disulfide bridges follow: Cys-30-Cys-74, Cys-60-Cys-86, Cys-91-Cys-132, Cys-118-Cys-148, Cys-153-Cys-196, Cys-182-Cys-213, Cys-218-Cys-260, Cys-246-Cys-273, Cys-278-Cys-328, Cys-312-Cys-340, Cys-345-Cys-393, Cys-378-Cys-406, Cys-411-Cys-452, and Cys-438-Cys-465. 2 N-linked (GlcNAc...) asparagine glycosylation sites follow: Asn-68 and Asn-77. N-linked (GlcNAc...) asparagine glycosylation is found at Asn-185, Asn-191, and Asn-200. N-linked (GlcNAc...) asparagine glycosylation is found at Asn-433 and Asn-455.

Homooligomer; disulfide-linked. May contain 6-8 monomers per oligomer. In terms of processing, the N-terminus may be blocked. Testis. Not expressed in heart, brain, liver or kidney.

The protein resides in the cytoplasmic vesicle. Its subcellular location is the secretory vesicle. The protein localises to the acrosome lumen. Probably involved in the formation of the dense core and M1 domain of the acrosome. May also regulate the release of certain secretory proteins following the acrosomal reaction. This Cavia porcellus (Guinea pig) protein is Zona pellucida sperm-binding protein 3 receptor (ZP3R).